A 269-amino-acid chain; its full sequence is Ribosomal RNA small subunit methyltransferase A (269 aa).

S-adenosyl-L-methionine contacts are provided by Asn18, Leu20, Gly45, Glu66, Asp91, and Asn112.

It belongs to the class I-like SAM-binding methyltransferase superfamily. rRNA adenine N(6)-methyltransferase family. RsmA subfamily.

Its subcellular location is the cytoplasm. The catalysed reaction is adenosine(1518)/adenosine(1519) in 16S rRNA + 4 S-adenosyl-L-methionine = N(6)-dimethyladenosine(1518)/N(6)-dimethyladenosine(1519) in 16S rRNA + 4 S-adenosyl-L-homocysteine + 4 H(+). In terms of biological role, specifically dimethylates two adjacent adenosines (A1518 and A1519) in the loop of a conserved hairpin near the 3'-end of 16S rRNA in the 30S particle. May play a critical role in biogenesis of 30S subunits. This chain is Ribosomal RNA small subunit methyltransferase A, found in Vibrio parahaemolyticus serotype O3:K6 (strain RIMD 2210633).